The chain runs to 152 residues: SsrA-binding protein (152 aa).

This sequence belongs to the SmpB family.

It is found in the cytoplasm. Required for rescue of stalled ribosomes mediated by trans-translation. Binds to transfer-messenger RNA (tmRNA), required for stable association of tmRNA with ribosomes. tmRNA and SmpB together mimic tRNA shape, replacing the anticodon stem-loop with SmpB. tmRNA is encoded by the ssrA gene; the 2 termini fold to resemble tRNA(Ala) and it encodes a 'tag peptide', a short internal open reading frame. During trans-translation Ala-aminoacylated tmRNA acts like a tRNA, entering the A-site of stalled ribosomes, displacing the stalled mRNA. The ribosome then switches to translate the ORF on the tmRNA; the nascent peptide is terminated with the 'tag peptide' encoded by the tmRNA and targeted for degradation. The ribosome is freed to recommence translation, which seems to be the essential function of trans-translation. The protein is SsrA-binding protein of Rickettsia africae (strain ESF-5).